The following is a 228-amino-acid chain: L-ribulose-5-phosphate 4-epimerase UlaF (228 aa).

Substrate is bound by residues 26–27, 43–44, and 72–73; these read GN, SG, and SS. 3 residues coordinate Zn(2+): aspartate 74, histidine 93, and histidine 95. Residue aspartate 118 is the Proton donor/acceptor of the active site. Histidine 167 contacts Zn(2+). Tyrosine 225 functions as the Proton donor/acceptor in the catalytic mechanism.

The protein belongs to the aldolase class II family. AraD/FucA subfamily. The cofactor is Zn(2+).

The catalysed reaction is L-ribulose 5-phosphate = D-xylulose 5-phosphate. Its pathway is cofactor degradation; L-ascorbate degradation; D-xylulose 5-phosphate from L-ascorbate: step 4/4. Functionally, catalyzes the isomerization of L-ribulose 5-phosphate to D-xylulose 5-phosphate. Is involved in the anaerobic L-ascorbate utilization. In Shigella flexneri, this protein is L-ribulose-5-phosphate 4-epimerase UlaF.